Here is a 128-residue protein sequence, read N- to C-terminus: Holo-[acyl-carrier-protein] synthase (128 aa).

Residues aspartate 8 and glutamate 60 each coordinate Mg(2+).

This sequence belongs to the P-Pant transferase superfamily. AcpS family. Mg(2+) serves as cofactor.

It localises to the cytoplasm. It carries out the reaction apo-[ACP] + CoA = holo-[ACP] + adenosine 3',5'-bisphosphate + H(+). Functionally, transfers the 4'-phosphopantetheine moiety from coenzyme A to a Ser of acyl-carrier-protein. This is Holo-[acyl-carrier-protein] synthase from Anaeromyxobacter dehalogenans (strain 2CP-C).